The sequence spans 509 residues: DNA primase large subunit (509 aa).

Residues 253–270 (LSHSYTGQDYSTQGNVGK) form an interdomain linker region. Residues 266–509 (GNVGKISLDQ…GLEDYFSEDS (244 aa)) form an interacts with PRIM1 region. [4Fe-4S] cluster is bound by residues C287, C367, C384, and C424. The interval 300 to 442 (HLRHGGRMQY…NVDDCGFSLN (143 aa)) is RNA:DNA duplex-binding. Residues 461 to 486 (IKKEPIQPETPQPKPSVQKTKDASSA) form a disordered region. Residue T470 is modified to Phosphothreonine.

Belongs to the eukaryotic-type primase large subunit family. As to quaternary structure, heterodimer of a catalytic subunit PRIM1 and a regulatory subunit PRIM2, also known as the DNA primase complex. Interacts via (C-terminus) with PRIM1. Component of the alpha DNA polymerase complex (also known as the alpha DNA polymerase-primase complex) consisting of four subunits: the catalytic subunit POLA1, the regulatory subunit POLA2, and the primase complex subunits PRIM1 and PRIM2 respectively. Within the complex, POLA1 directly interacts with PRIM2. [4Fe-4S] cluster is required as a cofactor.

Regulatory subunit of the DNA primase complex and component of the DNA polymerase alpha complex (also known as the alpha DNA polymerase-primase complex) which play an essential role in the initiation of DNA synthesis. During the S phase of the cell cycle, the DNA polymerase alpha complex (composed of a catalytic subunit POLA1, an accessory subunit POLA2 and two primase subunits, the catalytic subunit PRIM1 and the regulatory subunit PRIM2) is recruited to DNA at the replicative forks via direct interactions with MCM10 and WDHD1. The primase subunit of the polymerase alpha complex initiates DNA synthesis by oligomerising short RNA primers on both leading and lagging strands. These primers are initially extended by the polymerase alpha catalytic subunit and subsequently transferred to polymerase delta and polymerase epsilon for processive synthesis on the lagging and leading strand, respectively. In the primase complex, both subunits are necessary for the initial di-nucleotide formation, but the extension of the primer depends only on the catalytic subunit. Binds RNA:DNA duplex and coordinates the catalytic activities of PRIM1 and POLA2 during primase-to-polymerase switch. The protein is DNA primase large subunit (PRIM2) of Homo sapiens (Human).